The chain runs to 88 residues: Protein OPG197 (88 aa).

A compositionally biased stretch (acidic residues) spans 1–19 (MDTDTDTDTDTDTDTDTDT). Positions 1–22 (MDTDTDTDTDTDTDTDTDTDVT) are disordered. A run of 9 repeats spans residues 2 to 3 (DT), 4 to 5 (DT), 6 to 7 (DT), 8 to 9 (DT), 10 to 11 (DT), 12 to 13 (DT), 14 to 15 (DT), 16 to 17 (DT), and 18 to 19 (DT). A 9 X 2 AA tandem repeats of D-T region spans residues 2 to 19 (DTDTDTDTDTDTDTDTDT).

It belongs to the orthopoxvirus OPG197 family.

The chain is Protein OPG197 (OPG197) from Vaccinia virus (strain Copenhagen) (VACV).